The chain runs to 210 residues: Small ribosomal subunit protein uS7 (210 aa).

This sequence belongs to the universal ribosomal protein uS7 family. Component of the small ribosomal subunit. Part of the small subunit (SSU) processome, composed of more than 70 proteins and the RNA chaperone small nucleolar RNA (snoRNA) U3.

The protein localises to the cytoplasm. It localises to the nucleus. Its subcellular location is the nucleolus. In terms of biological role, component of the small ribosomal subunit. The ribosome is a large ribonucleoprotein complex responsible for the synthesis of proteins in the cell. Part of the small subunit (SSU) processome, first precursor of the small eukaryotic ribosomal subunit. During the assembly of the SSU processome in the nucleolus, many ribosome biogenesis factors, an RNA chaperone and ribosomal proteins associate with the nascent pre-rRNA and work in concert to generate RNA folding, modifications, rearrangements and cleavage as well as targeted degradation of pre-ribosomal RNA by the RNA exosome. In Caenorhabditis elegans, this protein is Small ribosomal subunit protein uS7 (rps-5).